We begin with the raw amino-acid sequence, 309 residues long: uncharacterized protein (309 aa).

The helical transmembrane segment at alanine 23–phenylalanine 43 threads the bilayer.

Belongs to the chlamydial CPn_0593/CT_474/TC_0759 family.

Its subcellular location is the membrane. This is an uncharacterized protein from Chlamydia trachomatis serovar D (strain ATCC VR-885 / DSM 19411 / UW-3/Cx).